Here is a 97-residue protein sequence, read N- to C-terminus: RNA-binding protein Hfq (97 aa).

The 61-residue stretch at 10–70 folds into the Sm domain; sequence DPFLNALRKE…ISTIVPARSV (61 aa).

Belongs to the Hfq family. As to quaternary structure, homohexamer.

Functionally, RNA chaperone that binds small regulatory RNA (sRNAs) and mRNAs to facilitate mRNA translational regulation in response to envelope stress, environmental stress and changes in metabolite concentrations. Also binds with high specificity to tRNAs. In Neisseria gonorrhoeae (strain ATCC 700825 / FA 1090), this protein is RNA-binding protein Hfq.